The primary structure comprises 304 residues: Acetyl-coenzyme A carboxylase carboxyl transferase subunit beta (304 aa).

One can recognise a CoA carboxyltransferase N-terminal domain in the interval 23–292 (VWTKCDSCGQ…PNPEAPREGV (270 aa)). C27, C30, C46, and C49 together coordinate Zn(2+). The segment at 27 to 49 (CDSCGQVLYRAELERNLEVCPKC) adopts a C4-type zinc-finger fold. A disordered region spans residues 284 to 304 (NPEAPREGVVVPPVPDQEPEA). Residues 295 to 304 (PPVPDQEPEA) are compositionally biased toward pro residues.

The protein belongs to the AccD/PCCB family. As to quaternary structure, acetyl-CoA carboxylase is a heterohexamer composed of biotin carboxyl carrier protein (AccB), biotin carboxylase (AccC) and two subunits each of ACCase subunit alpha (AccA) and ACCase subunit beta (AccD). Zn(2+) serves as cofactor.

Its subcellular location is the cytoplasm. The enzyme catalyses N(6)-carboxybiotinyl-L-lysyl-[protein] + acetyl-CoA = N(6)-biotinyl-L-lysyl-[protein] + malonyl-CoA. The protein operates within lipid metabolism; malonyl-CoA biosynthesis; malonyl-CoA from acetyl-CoA: step 1/1. Functionally, component of the acetyl coenzyme A carboxylase (ACC) complex. Biotin carboxylase (BC) catalyzes the carboxylation of biotin on its carrier protein (BCCP) and then the CO(2) group is transferred by the transcarboxylase to acetyl-CoA to form malonyl-CoA. This Escherichia coli O139:H28 (strain E24377A / ETEC) protein is Acetyl-coenzyme A carboxylase carboxyl transferase subunit beta.